The chain runs to 192 residues: ADP-ribosylation factor-like protein 4C (192 aa).

The N-myristoyl glycine moiety is linked to residue glycine 2. GTP-binding positions include 20-27 (GLDSAGKT), 68-72 (DVGGQ), and 127-130 (NKQD).

Belongs to the small GTPase superfamily. Arf family. In terms of assembly, interacts with CYTH2. Interacts with alpha tubulin; interaction is independent on the ARL4C GTP or GDP binding status. In terms of tissue distribution, expressed in several tumor cell lines (at protein level). Expressed in lung, brain, leukocytes and placenta.

It localises to the cell projection. The protein resides in the filopodium. The protein localises to the cell membrane. It is found in the cytoplasm. Its function is as follows. Small GTP-binding protein which cycles between an inactive GDP-bound and an active GTP-bound form, and the rate of cycling is regulated by guanine nucleotide exchange factors (GEF) and GTPase-activating proteins (GAP). GTP-binding protein that does not act as an allosteric activator of the cholera toxin catalytic subunit. May be involved in transport between a perinuclear compartment and the plasma membrane, apparently linked to the ABCA1-mediated cholesterol secretion pathway. Recruits CYTH1, CYTH2, CYTH3 and CYTH4 to the plasma membrane in the GDP-bound form. Regulates the microtubule-dependent intracellular vesicular transport from early endosome to recycling endosome process. This Homo sapiens (Human) protein is ADP-ribosylation factor-like protein 4C (ARL4C).